Consider the following 393-residue polypeptide: Phosphoglycerate kinase (393 aa).

Substrate is bound by residues 22 to 24 (DFN), Arg37, 60 to 63 (HLGR), Arg119, and Arg152. ATP-binding positions include Lys202, Gly293, Glu324, and 350–353 (GGDS).

The protein belongs to the phosphoglycerate kinase family. Monomer.

The protein localises to the cytoplasm. It carries out the reaction (2R)-3-phosphoglycerate + ATP = (2R)-3-phospho-glyceroyl phosphate + ADP. It functions in the pathway carbohydrate degradation; glycolysis; pyruvate from D-glyceraldehyde 3-phosphate: step 2/5. This Borreliella burgdorferi (strain ZS7) (Borrelia burgdorferi) protein is Phosphoglycerate kinase.